The primary structure comprises 176 residues: uncharacterized protein (176 aa).

Residues 71-176 (RDDMSSDSDG…YSTDDDEDDY (106 aa)) are disordered. Low complexity-rich tracts occupy residues 77–87 (DSDGPAASPPG) and 100–109 (SYSSSDSSAR). Residues 140–152 (KARRPARKKKRIG) are compositionally biased toward basic residues.

This is an uncharacterized protein from Orgyia pseudotsugata multicapsid polyhedrosis virus (OpMNPV).